The following is a 220-amino-acid chain: Large ribosomal subunit protein uL16z (220 aa).

It belongs to the universal ribosomal protein uL16 family. As to quaternary structure, component of the small ribosomal subunit. Mature ribosomes consist of a small (40S) and a large (60S) subunit. The 40S subunit contains about 33 different proteins and 1 molecule of RNA (18S). The 60S subunit contains about 49 different proteins and 3 molecules of RNA (25S, 5.8S and 5S). Interacts with NIK1. Interacts with LIMYB. In terms of processing, phosphorylated by NIK1 and NIK2 in vitro. In terms of tissue distribution, ubiquitous, with the highest expression in flowers. Expressed in seedlings, leaves, roots, stems and flowers. Expressed in young leaves, mostly in dividing cells and in the hydathodes, in the root tips and lateral root primordia, in pistils, anthers, and pollen grains, and in developing seeds.

The protein localises to the cytoplasm. It localises to the nucleus. In terms of biological role, ribosomal protein involved in translational regulation. Contribute to general translation under UV-B stress. Involved in the NIK1-mediated defense response to geminivirus infection. Acts coordinately with LIMYB as a transcriptional repressor. This chain is Large ribosomal subunit protein uL16z, found in Arabidopsis thaliana (Mouse-ear cress).